The sequence spans 213 residues: Kiwellin (213 aa).

A signal peptide spans 1-24 (MAQLSLLVLSLFLTLISLPPPGAS). Cystine bridges form between Cys28–Cys60, Cys32–Cys44, and Cys38–Cys49. 4-hydroxyproline occurs at positions 65 and 67. 4 cysteine pairs are disulfide-bonded: Cys72/Cys90, Cys80/Cys172, Cys119/Cys144, and Cys166/Cys182. Positions 91-121 (SPPVTSSTPAKLTNNDFSEGGDGGGPSECDE) are disordered. Over residues 93-107 (PVTSSTPAKLTNNDF) the composition is skewed to polar residues.

Belongs to the kiwellin family. Post-translationally, undergoes proteolytic cleavage by actinidin to produce kissper and KiTH. Three forms of KiTH are produced by cleavage at different sites.

It is found in the secreted. Kissper is an anion-selective pore-forming peptide. This Actinidia chinensis var. chinensis (Chinese soft-hair kiwi) protein is Kiwellin.